Here is a 447-residue protein sequence, read N- to C-terminus: NAC domain containing protein 50 (447 aa).

The interval 1 to 21 (MGRESLAVVSSPPSATAPSTA) is disordered. The NAC domain occupies 27–178 (LAPGFRFHPT…AYVLCRVFHK (152 aa)). Residues 126-184 (LGMKKTLVFHSGRAPDGLRTNWVMHEYRLVEYETETNGSLLQDAYVLCRVFHKNNIGPP) mediate DNA binding. 2 disordered regions span residues 246–303 (DATP…NKEA) and 371–392 (KENQ…EEKV). The segment covering 281–293 (TLKREHAEEDERP) has biased composition (basic and acidic residues). The stretch at 392–447 (VNDLQKEVHQMSVERETFKLEMMSAEAMISILQSRIDALRQENEELKKKNASGQAS) forms a coiled coil.

In terms of assembly, interacts with JMJ14 and NAC052. In terms of tissue distribution, mostly expressed in floral organs, and, at low levels, in other organs.

Its subcellular location is the nucleus. Its function is as follows. Transcriptional repressor that binds to the motif 5'-(C/T)A(C/A)G-3' in the promoter of target genes. Also binds to the 5'-CTTGNNNNNCAAG-3' consensus sequence in chromatin. Can bind to the mitochondrial dysfunction motif (MDM) present in the upstream regions of mitochondrial dysfunction stimulon (MDS) genes involved in mitochondrial retrograde regulation (MRR). Together with NAC051/NAC052 and JMJ14, regulates gene expression and flowering time by associating with the histone demethylase JMJ14, probably by the promotion of RNA-mediated gene silencing. This Arabidopsis thaliana (Mouse-ear cress) protein is NAC domain containing protein 50.